The following is a 735-amino-acid chain: Peroxisomal multifunctional enzyme type 2 (735 aa).

The segment at 1 to 305 is (3R)-hydroxyacyl-CoA dehydrogenase; sequence MASPLRFDGR…VEVLHKVDSE (305 aa). NAD(+)-binding positions include 13-37, Leu-21, and Asp-40; that span reads LVTGAGGGLGRAYALAFAERGALVI. At Lys-46 the chain carries N6-acetyllysine; alternate. Lys-46 bears the N6-succinyllysine; alternate mark. Position 52 is a phosphoserine (Ser-52). 2 positions are modified to N6-succinyllysine: Lys-57 and Lys-68. 75–76 lines the NAD(+) pocket; it reads SV. An N6-succinyllysine modification is found at Lys-84. Position 99 (Asn-99) interacts with NAD(+). Residue Ser-151 participates in substrate binding. Tyr-164 acts as the Proton acceptor in catalysis. NAD(+)-binding positions include 164–168 and 196–199; these read YSAAK and AGSR. Thr-265 carries the phosphothreonine modification. Lys-275 carries the post-translational modification N6-succinyllysine. Phosphoserine occurs at positions 304 and 308. Residues 321 to 621 are enoyl-CoA hydratase 2; it reads SGFVGAVGHK…TQTPSEGGEL (301 aa). At Lys-355 the chain carries N6-succinyllysine. 405–406 is a (3R)-3-hydroxydecanoyl-CoA binding site; it reads HG. Lys-423 is modified (N6-succinyllysine). (3R)-3-hydroxydecanoyl-CoA is bound by residues Lys-434, 509-514, Gly-532, and Phe-562; that span reads DWNPLH. A MaoC-like domain is found at 483–599; the sequence is VPNRPPDAVL…HETGDVVISN (117 aa). Lys-564 carries the post-translational modification N6-acetyllysine. Lys-578 and Lys-662 each carry N6-succinyllysine. Positions 623 to 735 constitute an SCP2 domain; it reads SALVFGEIGR…QMILKDYAKL (113 aa). An N6-acetyllysine modification is found at Lys-668. Residue Gln-705 participates in substrate binding. The residue at position 706 (Lys-706) is an N6-acetyllysine. Gln-723 is a binding site for substrate. Lys-724 carries the N6-succinyllysine modification. The Microbody targeting signal motif lies at 733-735; the sequence is AKL.

The protein belongs to the short-chain dehydrogenases/reductases (SDR) family. Homodimer. As to expression, present in many tissues with highest concentrations in liver and kidney.

It is found in the peroxisome. It catalyses the reaction a (3R)-3-hydroxyacyl-CoA + NAD(+) = a 3-oxoacyl-CoA + NADH + H(+). It carries out the reaction (24R,25R)-3alpha,7alpha,12alpha,24-tetrahydroxy-5beta-cholestan-26-oyl-CoA = (24E)-3alpha,7alpha,12alpha-trihydroxy-5beta-cholest-24-en-26-oyl-CoA + H2O. The catalysed reaction is a (3R)-3-hydroxyacyl-CoA = a (2E)-enoyl-CoA + H2O. The enzyme catalyses (2E)-octenoyl-CoA + H2O = (3R)-hydroxyoctanoyl-CoA. It catalyses the reaction (3R)-hydroxyoctanoyl-CoA + NAD(+) = 3-oxooctanoyl-CoA + NADH + H(+). It carries out the reaction (3R)-hydroxyhexadecanoyl-CoA + NAD(+) = 3-oxohexadecanoyl-CoA + NADH + H(+). The catalysed reaction is (2E)-hexadecenedioyl-CoA + H2O = (3R)-hydroxyhexadecanedioyl-CoA. The enzyme catalyses (3R)-hydroxyhexadecanedioyl-CoA + NAD(+) = 3-oxohexadecanedioyl-CoA + NADH + H(+). It catalyses the reaction (3R)-hydroxyhexadecanoyl-CoA = (2E)-hexadecenoyl-CoA + H2O. It carries out the reaction (3R)-3-hydroxydecanoyl-CoA = (2E)-decenoyl-CoA + H2O. The catalysed reaction is (3R)-3-hydroxydecanoyl-CoA + NAD(+) = 3-oxodecanoyl-CoA + NADH + H(+). The enzyme catalyses (24R,25R)-3alpha,7alpha,12alpha,24-tetrahydroxy-5beta-cholestan-26-oyl-CoA + NAD(+) = 3alpha,7alpha,12alpha-trihydroxy-24-oxo-5beta-cholestan-26-oyl-CoA + NADH + H(+). Its pathway is lipid metabolism; fatty acid beta-oxidation. Bifunctional enzyme acting on the peroxisomal fatty acid beta-oxidation pathway. Catalyzes two of the four reactions in fatty acid degradation: hydration of 2-enoyl-CoA (trans-2-enoyl-CoA) to produce (3R)-3-hydroxyacyl-CoA, and dehydrogenation of (3R)-3-hydroxyacyl-CoA to produce 3-ketoacyl-CoA (3-oxoacyl-CoA), which is further metabolized by SCPx. Can use straight-chain and branched-chain fatty acids, as well as bile acid intermediates as substrates. The polypeptide is Peroxisomal multifunctional enzyme type 2 (Mus musculus (Mouse)).